Here is a 408-residue protein sequence, read N- to C-terminus: Aspartokinase 2 (408 aa).

ATP is bound at residue 7-10 (KFGG). Substrate is bound at residue 25-30 (RAIAEK). Residue serine 41 coordinates ATP. Substrate-binding positions include 47 to 49 (TDE), glutamate 74, 125 to 126 (LE), 150 to 153 (RGGS), and serine 153. Residues 173–174 (TD) and 179–184 (FTTDPR) contribute to the ATP site. ACT domains are found at residues 264-337 (VTIY…TESK) and 343-408 (IVGS…PSAV). Substrate contacts are provided by residues 289–291 (NVD), glutamine 295, 354–355 (VA), 368–369 (LI), and 375–376 (SE).

Belongs to the aspartokinase family. As to quaternary structure, tetramer consisting of 2 isoforms Alpha (catalytic and regulation) and of a homodimer of 2 isoforms Beta (regulation).

The enzyme catalyses L-aspartate + ATP = 4-phospho-L-aspartate + ADP. It functions in the pathway amino-acid biosynthesis; L-lysine biosynthesis via DAP pathway; (S)-tetrahydrodipicolinate from L-aspartate: step 1/4. Its pathway is amino-acid biosynthesis; L-methionine biosynthesis via de novo pathway; L-homoserine from L-aspartate: step 1/3. The protein operates within amino-acid biosynthesis; L-threonine biosynthesis; L-threonine from L-aspartate: step 1/5. Its activity is regulated as follows. Lysine-sensitive. Regulated by degradation in response to starvation of cells for various nutrients. Ammonium starvation induced the fastest aspartokinase II decline, followed by amino acid starvation and glucose limitation. Catalyzes the phosphorylation of the beta-carboxyl group of aspartic acid with ATP to yield 4-phospho-L-aspartate, which is involved in the branched biosynthetic pathway leading to the biosynthesis of amino acids threonine, isoleucine and methionine. The chain is Aspartokinase 2 (lysC) from Bacillus subtilis (strain 168).